A 140-amino-acid polypeptide reads, in one-letter code: Relaxin-3 (140 aa).

The signal sequence occupies residues Met1–Ala23. 3 cysteine pairs are disulfide-bonded: Cys33/Cys127, Cys45/Cys140, and Cys126/Cys131. Positions Ala53 to Arg116 are cleaved as a propeptide — connecting peptide.

Belongs to the insulin family. As to quaternary structure, heterodimer of a B chain and an A chain linked by two disulfide bonds. In terms of tissue distribution, highly abundant expression is detected in neurons within the ventomedial dorsal tegmental nucleus and the laterally central gray alpha of the pons. Also detected at much lower levels within the hippocampus.

The protein localises to the secreted. In terms of biological role, may play a role in neuropeptide signaling processes. Ligand for LGR7, relaxin-3 receptor-1 and relaxin-3 receptor-2. The polypeptide is Relaxin-3 (Rln3) (Rattus norvegicus (Rat)).